The sequence spans 388 residues: Nocturnin (388 aa).

Glu-152 contacts Mg(2+). Substrate contacts are provided by residues Glu-152, 176–178 (KPW), Asn-220, 243–246 (HLKA), 281–283 (DFN), and His-371.

Belongs to the CCR4/nocturin family. Requires Mg(2+) as cofactor. Expressed only in the photoreceptors of the retina. Expression is controlled by the retinal circadian clock.

It localises to the cytoplasm. The protein resides in the nucleus. The protein localises to the perinuclear region. It is found in the mitochondrion. The catalysed reaction is NADP(+) + H2O = phosphate + NAD(+). It carries out the reaction NADPH + H2O = phosphate + NADH. Its function is as follows. Phosphatase which catalyzes the conversion of NADP(+) to NAD(+) and of NADPH to NADH. Shows a small preference for NADPH over NADP(+). Component of the circadian clock or downstream effector of clock function. Exhibits a high amplitude circadian rhythm with maximal levels in early evening. In constant darkness or constant light, the amplitude of the rhythm decreases. In Xenopus laevis (African clawed frog), this protein is Nocturnin.